The following is a 1984-amino-acid chain: Spermatogenesis-associated protein 31H1 (1984 aa).

Disordered regions lie at residues 448–467 (MGLT…TPGP), 1045–1067 (PMEE…QHSL), 1181–1287 (YRER…SDSK), 1326–1346 (RIGA…KPSQ), and 1439–1984 (QQPR…EATR). 3 stretches are compositionally biased toward polar residues: residues 450-463 (LTKS…SPGT), 1058-1067 (TRISESQHSL), and 1205-1226 (TQAS…QSPA). Residues 1238-1247 (SRPDLVEKTK) are compositionally biased toward basic and acidic residues. Composition is skewed to polar residues over residues 1458–1471 (TDSQ…TASV) and 1492–1508 (RNET…TPGT). 2 stretches are compositionally biased toward basic and acidic residues: residues 1532–1558 (DKLT…ERTR) and 1568–1579 (SPSERSQRSSLE). A run of 3 repeats spans residues 1593–1600 (PSRKNHSS), 1601–1608 (PSERSWRS), and 1609–1616 (PSQRNHCS). Residues 1593-1935 (PSRKNHSSPS…CSPSERSRRS (343 aa)) are 27 X 8 AA approximate tandem repeat of P-S-E-R-S-H-H-S. Residues 1599–1610 (SSPSERSWRSPS) are compositionally biased toward low complexity. The span at 1620-1630 (RSCHSLSERGL) shows a compositional bias: basic and acidic residues. A compositionally biased stretch (basic residues) spans 1636 to 1647 (RSHRGPSQRRHH). Repeat copies occupy residues 1641–1648 (PSQRRHHS), 1649–1656 (PSERSHRS), and 1657–1664 (PSERSHRS). Over residues 1648–1667 (SPSERSHRSPSERSHRSSSE) the composition is skewed to basic and acidic residues. The span at 1668 to 1679 (RRHRSPSQRSHR) shows a compositional bias: basic residues. Residues 1680 to 1691 (GPSERSHCSPSE) are compositionally biased toward basic and acidic residues. 19 repeat units span residues 1681-1688 (PSERSHCS), 1689-1696 (PSERRHRS), 1697-1704 (PSQRSHRG), 1705-1712 (PSERRHHS), 1713-1720 (PSKRSHRS), 1721-1728 (PARRSHRS), 1729-1736 (PSERSHHS), 1737-1744 (PSERSHHS), 1745-1752 (PSERRHHS), 1753-1760 (PSERSHCS), 1761-1768 (PSERSHCS), 1769-1776 (PSERRHRS), 1777-1784 (PSERRHHS), 1785-1792 (PSEKSHHS), 1793-1800 (PSERSHHS), 1801-1808 (PSERRRHS), 1848-1855 (PSEKSHLS), 1864-1871 (PSERRGHS), and 1880-1887 (PSERSHRS). Residues 1692–1727 (RRHRSPSQRSHRGPSERRHHSPSKRSHRSPARRSHR) show a composition bias toward basic residues. Over residues 1728 to 1869 (SPSERSHHSP…SRCSPSERRG (142 aa)) the composition is skewed to basic and acidic residues. Composition is skewed to basic and acidic residues over residues 1895–1917 (RTSE…EMRP), 1928–1941 (PSER…KEGL), and 1949–1959 (RPSHSLSRDFK). A run of 2 repeats spans residues 1921-1928 (SGRNHCSP) and 1929-1935 (SERSRRS). A compositionally biased stretch (polar residues) spans 1960–1969 (NQTTLLGTTH).

In terms of tissue distribution, expressed in sperm (at protein level).

This Homo sapiens (Human) protein is Spermatogenesis-associated protein 31H1.